We begin with the raw amino-acid sequence, 122 residues long: Protein MGF 100-1R (122 aa).

The protein belongs to the asfivirus MGF 100 family.

Its function is as follows. Plays a role in virus cell tropism, and may be required for efficient virus replication in macrophages. This chain is Protein MGF 100-1R, found in Ornithodoros (relapsing fever ticks).